A 155-amino-acid polypeptide reads, in one-letter code: MGRFIFVSFGLLVVFLSLSGTAADCLPGWSSYIRFCYQPFKLLKTWEDAERFCTEQANGGHLVSFESAREADFVAGVLSENIKIKPYVWIGLRVQNEGQQCSSKWSDSSKVSYENLVEPFSKKCFVLKKDTGFRTWENVYCGLKHVFMCKYLKPR.

Residues 1–23 (MGRFIFVSFGLLVVFLSLSGTAA) form the signal peptide. 3 cysteine pairs are disulfide-bonded: Cys25/Cys36, Cys53/Cys149, and Cys124/Cys141. The C-type lectin domain occupies 32–150 (YIRFCYQPFK…CGLKHVFMCK (119 aa)).

The protein belongs to the snaclec family. Heterodimer of subunits alpha and beta; disulfide-linked. Expressed by the venom gland.

It is found in the secreted. Its function is as follows. Is a potent glycoprotein Ibalpha (GP1BA) antagonist. Concentration-dependently inhibits botrocetin-, ristocetin- and low dose thrombin-induced platelet aggregation. Inhibits platelet adhesion only through inhibiting the vWF interaction with GP1BA, but has minimal effect on other platelet receptors, such as alpha-IIb/beta-3 (ITGA2B/ITGB3) or alpha-2/beta-1 (ITGA2/ITGB1). Causes an instant severe thrombocytopenia in rats and is not lethal to mice. In Deinagkistrodon acutus (Hundred-pace snake), this protein is Snaclec agkicetin-C subunit alpha.